The chain runs to 514 residues: Periplasmic [NiFeSe] hydrogenase large subunit (514 aa).

Glutamate 52 serves as a coordination point for Fe cation. Ni(2+)-binding residues include cysteine 71 and cysteine 74. Residues cysteine 74 and isoleucine 445 each contribute to the Fe cation site. Residues selenocysteine 493 and cysteine 496 each coordinate Ni(2+). Selenocysteine 493 is a non-standard amino acid (selenocysteine). Residues cysteine 496 and histidine 499 each contribute to the Fe cation site.

This sequence belongs to the [NiFe]/[NiFeSe] hydrogenase large subunit family. As to quaternary structure, heterodimer of a large and a small subunit. Requires Fe cation as cofactor. The cofactor is Ni(2+).

It localises to the periplasm. The catalysed reaction is H2 + A = AH2. In Desulfomicrobium baculatum (Desulfovibrio baculatus), this protein is Periplasmic [NiFeSe] hydrogenase large subunit.